The sequence spans 119 residues: Ribonuclease (119 aa).

2 residues coordinate substrate: Lys-6 and Arg-9. His-11 functions as the Proton acceptor in the catalytic mechanism. 3 disulfides stabilise this stretch: Cys-26/Cys-81, Cys-40/Cys-92, and Cys-58/Cys-107. Residues 41–45 (KFTNT) and Arg-82 each bind substrate. Catalysis depends on His-114, which acts as the Proton donor.

Belongs to the pancreatic ribonuclease family. Monomer. Interacts with and forms tight 1:1 complexes with RNH1. Dimerization of two such complexes may occur. Interaction with RNH1 inhibits this protein. As to expression, pancreas.

It localises to the secreted. It carries out the reaction an [RNA] containing cytidine + H2O = an [RNA]-3'-cytidine-3'-phosphate + a 5'-hydroxy-ribonucleotide-3'-[RNA].. The enzyme catalyses an [RNA] containing uridine + H2O = an [RNA]-3'-uridine-3'-phosphate + a 5'-hydroxy-ribonucleotide-3'-[RNA].. In terms of biological role, endonuclease that catalyzes the cleavage of RNA on the 3' side of pyrimidine nucleotides. Acts on single-stranded and double-stranded RNA. This chain is Ribonuclease, found in Chelydra serpentina (Snapping turtle).